The chain runs to 300 residues: Urease accessory protein UreD (300 aa).

This sequence belongs to the UreD family. In terms of assembly, ureD, UreF and UreG form a complex that acts as a GTP-hydrolysis-dependent molecular chaperone, activating the urease apoprotein by helping to assemble the nickel containing metallocenter of UreC. The UreE protein probably delivers the nickel.

The protein resides in the cytoplasm. In terms of biological role, required for maturation of urease via the functional incorporation of the urease nickel metallocenter. The protein is Urease accessory protein UreD of Prochlorococcus marinus (strain MIT 9215).